Reading from the N-terminus, the 322-residue chain is MLFATLEHILTHISFSTISIVITIHLITLLVRELGRLRDSSEKGMIVTFFSITGFLVSRWVSSGHFPLSNLYESLIFLSWALYILHTIPKIQNSKNDLSTITTPSTILTQGFATSGLLTEMHQSTILVPALQSQWLMMHVSMMLLSYATLLCGSLLSAAILIIRFRNNFHFFSKKKKNVLNKTFFFSEIAFFYAKRSALKSAPVPSFPNYYKYQLTERLDSWSYRIISLGFTLLTIGILCGAVWANEAWGSYWNWDPKETWAFITWTIFAIYLHSRTNPNWKGTNSALIASIGFLIIWICYFGINLLGIGLHSYGSFTLTPK.

The next 7 helical transmembrane spans lie at 9 to 29 (ILTH…LITL), 44 to 64 (GMIV…VSSG), 68 to 88 (LSNL…LHTI), 143 to 163 (MLLS…ILII), 226 to 246 (IISL…VWAN), 260 to 274 (TWAF…IYLH), and 289 to 309 (IASI…LLGI).

It belongs to the CcmF/CycK/Ccl1/NrfE/CcsA family. May interact with Ccs1.

The protein localises to the plastid. The protein resides in the chloroplast thylakoid membrane. Its function is as follows. Required during biogenesis of c-type cytochromes (cytochrome c6 and cytochrome f) at the step of heme attachment. This chain is Cytochrome c biogenesis protein CcsA, found in Hordeum vulgare (Barley).